Reading from the N-terminus, the 235-residue chain is Large ribosomal subunit protein uL1 (235 aa).

It belongs to the universal ribosomal protein uL1 family. Part of the 50S ribosomal subunit.

Binds directly to 23S rRNA. The L1 stalk is quite mobile in the ribosome, and is involved in E site tRNA release. Functionally, protein L1 is also a translational repressor protein, it controls the translation of the L11 operon by binding to its mRNA. This chain is Large ribosomal subunit protein uL1, found in Prochlorococcus marinus (strain MIT 9313).